A 60-amino-acid chain; its full sequence is Cecropin-B type 1 (60 aa).

An N-terminal signal peptide occupies residues 1 to 24 (MNFNKLFALVLLIGLVLLTGQTEA). Position 58 is an isoleucine amide (I58).

Belongs to the cecropin family.

The protein localises to the secreted. In terms of biological role, cecropins have lytic and antibacterial activity against several Gram-positive and Gram-negative bacteria. This Aedes albopictus (Asian tiger mosquito) protein is Cecropin-B type 1 (CECB1).